The primary structure comprises 487 residues: Protein nucleotidyltransferase YdiU (487 aa).

Positions 90, 92, 93, 113, 125, 126, 176, and 183 each coordinate ATP. The Proton acceptor role is filled by D252. Mg(2+) is bound by residues N253 and D262. Residue D262 coordinates ATP.

It belongs to the SELO family. Mg(2+) is required as a cofactor. Mn(2+) serves as cofactor.

It carries out the reaction L-seryl-[protein] + ATP = 3-O-(5'-adenylyl)-L-seryl-[protein] + diphosphate. The enzyme catalyses L-threonyl-[protein] + ATP = 3-O-(5'-adenylyl)-L-threonyl-[protein] + diphosphate. It catalyses the reaction L-tyrosyl-[protein] + ATP = O-(5'-adenylyl)-L-tyrosyl-[protein] + diphosphate. The catalysed reaction is L-histidyl-[protein] + UTP = N(tele)-(5'-uridylyl)-L-histidyl-[protein] + diphosphate. It carries out the reaction L-seryl-[protein] + UTP = O-(5'-uridylyl)-L-seryl-[protein] + diphosphate. The enzyme catalyses L-tyrosyl-[protein] + UTP = O-(5'-uridylyl)-L-tyrosyl-[protein] + diphosphate. Its function is as follows. Nucleotidyltransferase involved in the post-translational modification of proteins. It can catalyze the addition of adenosine monophosphate (AMP) or uridine monophosphate (UMP) to a protein, resulting in modifications known as AMPylation and UMPylation. In Pseudomonas fluorescens (strain ATCC BAA-477 / NRRL B-23932 / Pf-5), this protein is Protein nucleotidyltransferase YdiU.